Consider the following 999-residue polypeptide: MYQSIPQQGNYIYNGNNNFFPQQQPQQQQYLNNSNNNNNNNNNNNNNNNNINNNNNNFQQSYNNGNNNNYNNNNGYQQQTSSYDMYGNNVNINNNNNNNVNINSQNNVNNNNNNNNNNNNGNINNNMLMATSSALNNIVKVTNGYQQQQQQQLLQQTTQQQLQQQQQLLQQQQQQIQQQQAALQLQLEQQQQQKMVLMFGDEPMGYLPFSEDKNLMLLSALNTNVDGGSFYGIQQQQQQQQLQQQQLQQQQQLQQQQQQLQQQQIQQQQIQQQQQQQQQQISPIQESASPYYSTPIQSNTMLSIPSSPGIPSSIPQLNNSNNINNNSNNNNNNNNNNNNNNINYNSNMASNFISQHSNNGSNTSSPVPQTTYLQNSGGNFNAYNGSNTNSPITPSSYLQPTTSQDQVIPQQLSPNHDQNQQIIQQQQKILQQQQQQQLLLQQQIQQQQQQQLHQPQSPQLPQSPQQSPQQSPQQLQPQQSPQQPQQQPQQQPQQLQQTQQKTVQRPPIIQPTTIQPQSPQPPQQPQQKQPTINSSITPIQPIQQMIQQLTQNSSTKSTSKASNIPATTAACPKVDLLPNKSPISSYILPHDFEETLAHLSEKQKTRRRASQNLASRNYRQRKKQYVNEVEDRLDDIVQENERLKKELYDSKKILKKLLHENNILKSGGQLPNKSDIPGCTGSEDEDEDDFDQFDQQQQDGSADPSTPVVETEPDISVLVDRLQVDMSITTQDDLTTTLKQFYSTLKNRQDLYINQIKQIVNPCTQAKLALLDGEISPAQSCPFEDPSEKQHSDPNSSPIGDMPSPYEQLEPTKWWSNFCNEANINPEQENRVRQLRQESNLRHKKIIKERTHLNREIREYYHSKVFNGTVNNGGNTKSKKTAASTSTTTTTTSTSTTTTTTTTISTDVDISNNISSPVQSHLVQLSGLLDKLKENIDHENETLIQTYEKLGFILSPFQEALFITKIYNNIFSESSYSNIQMLHGIKDAILYSYVDPTYT.

Composition is skewed to low complexity over residues 1–79 (MYQS…YQQQ) and 88–126 (NNVN…INNN). A disordered region spans residues 1 to 126 (MYQSIPQQGN…NNNNGNINNN (126 aa)). 2 coiled-coil regions span residues 148–198 (QQQQ…MVLM) and 232–282 (GIQQ…QQIS). A compositionally biased stretch (polar residues) spans 286–302 (ESASPYYSTPIQSNTML). Disordered stretches follow at residues 286 to 406 (ESAS…SQDQ), 450 to 533 (QQLH…PTIN), and 601 to 620 (EKQK…NYRQ). Positions 303–347 (SIPSSPGIPSSIPQLNNSNNINNNSNNNNNNNNNNNNNNINYNSN) are enriched in low complexity. The segment covering 348–406 (MASNFISQHSNNGSNTSSPVPQTTYLQNSGGNFNAYNGSNTNSPITPSSYLQPTTSQDQ) has biased composition (polar residues). The stretch at 423-451 (IQQQQKILQQQQQQQLLLQQQIQQQQQQQ) forms a coiled coil. The segment covering 450–517 (QQLHQPQSPQ…IIQPTTIQPQ (68 aa)) has biased composition (low complexity). The bZIP domain maps to 601 to 664 (EKQKTRRRAS…KKLLHENNIL (64 aa)). The basic motif stretch occupies residues 602 to 632 (KQKTRRRASQNLASRNYRQRKKQYVNEVEDR). The segment at 636–643 (IVQENERL) is leucine-zipper. Disordered regions lie at residues 665 to 711 (KSGG…VVET), 779 to 807 (QSCP…SPYE), and 870 to 899 (VNNG…TTTT). The segment covering 682–692 (SEDEDEDDFDQ) has biased composition (acidic residues). Residues 921 to 950 (HLVQLSGLLDKLKENIDHENETLIQTYEKL) are a coiled coil.

This sequence belongs to the bZIP family.

It is found in the nucleus. Probable transcriptional regulator. In Dictyostelium discoideum (Social amoeba), this protein is Probable basic-leucine zipper transcription factor N (bzpN).